Consider the following 330-residue polypeptide: MSNGGNAGKKSSSYFHFTAGLGSGILSAVLLQPADLLKTRLQQSNHASLLTTIRELSQSPNTIRSFWRGTVPSALRTGFGSAIYFTSLNALRQNVARSNLLRTIGVVDAKNGPVHSSSLPKLSNLANLTTGAVARAGAGFVLMPMTIIKVRYESNLYAYKSIMGAGRDIFLTEGFRGFFSGFGATAIRDAPYAGLYVLFYEQLKKRLSHIVHSVPQAEELVENLGVRKNMKGSTSASINFGSGVLAAGLATAITNPFDAIKTRIQLQPKKYTNLVMAGRKMVGEEGVKSLFDGLGLRMGRKAVSSALAWTIYEELIRRAELAWKGEEVIV.

Solcar repeat units lie at residues 11–94 (SSSY…LRQN), 122–206 (LSNL…LKKR), and 234–318 (TSAS…LIRR). The next 6 helical transmembrane spans lie at 17-42 (FTAG…TRLQ), 69-95 (GTVP…RQNV), 128-153 (LTTG…VRYE), 181-204 (GFGA…EQLK), 238-264 (INFG…KTRI), and 293-311 (GLGL…AWTI).

Belongs to the mitochondrial carrier (TC 2.A.29) family. SLC25A38 subfamily.

It is found in the mitochondrion inner membrane. It carries out the reaction glycine(in) = glycine(out). In terms of biological role, mitochondrial glycine transporter that imports glycine into the mitochondrial matrix. Plays an important role in providing glycine for the first enzymatic step in heme biosynthesis, the condensation of glycine with succinyl-CoA to produce 5-aminolevulinate (ALA) in the mitochondrial matrix. The polypeptide is Mitochondrial glycine transporter (Sclerotinia sclerotiorum (strain ATCC 18683 / 1980 / Ss-1) (White mold)).